The primary structure comprises 206 residues: MELNVTTLEGKAAGSVHLSDGIFGLEPRKDLIQRCVNWQLAKSQAGTHKTKGRAEIWRTGKKLFKQKGTGNARHGSARAPQFRGGGRAFGPVVRSHAHDLPKKVRALALRHALSAKAKDGGLIVIDSVELKEAKTKALMGHFSSLGLTSALIIDGAQVHAGFATAARNIPNIDVLPIQGINVYDILRRQKLVLTKAAVDALEARFK.

The protein belongs to the universal ribosomal protein uL4 family. As to quaternary structure, part of the 50S ribosomal subunit.

Functionally, one of the primary rRNA binding proteins, this protein initially binds near the 5'-end of the 23S rRNA. It is important during the early stages of 50S assembly. It makes multiple contacts with different domains of the 23S rRNA in the assembled 50S subunit and ribosome. Forms part of the polypeptide exit tunnel. The chain is Large ribosomal subunit protein uL4 from Nitrobacter winogradskyi (strain ATCC 25391 / DSM 10237 / CIP 104748 / NCIMB 11846 / Nb-255).